Consider the following 291-residue polypeptide: Proteasome subunit beta (291 aa).

Residues 1–56 constitute a propeptide, removed in mature form; by autocatalysis; it reads MTRSFPDRLPTNLAFPGISVINQSSFVDLLRRQAPELLPVSLGGGQSGGGQQLSHG. Residue T57 is the Nucleophile of the active site.

Belongs to the peptidase T1B family. The 20S proteasome core is composed of 14 alpha and 14 beta subunits that assemble into four stacked heptameric rings, resulting in a barrel-shaped structure. The two inner rings, each composed of seven catalytic beta subunits, are sandwiched by two outer rings, each composed of seven alpha subunits. The catalytic chamber with the active sites is on the inside of the barrel. Has a gated structure, the ends of the cylinder being occluded by the N-termini of the alpha-subunits. Is capped by the proteasome-associated ATPase, ARC.

The protein localises to the cytoplasm. The enzyme catalyses Cleavage of peptide bonds with very broad specificity.. Its pathway is protein degradation; proteasomal Pup-dependent pathway. Its activity is regulated as follows. The formation of the proteasomal ATPase ARC-20S proteasome complex, likely via the docking of the C-termini of ARC into the intersubunit pockets in the alpha-rings, may trigger opening of the gate for substrate entry. Interconversion between the open-gate and close-gate conformations leads to a dynamic regulation of the 20S proteasome proteolysis activity. Functionally, component of the proteasome core, a large protease complex with broad specificity involved in protein degradation. The polypeptide is Proteasome subunit beta (Mycobacterium leprae (strain Br4923)).